The chain runs to 193 residues: MLNISKKNIIFFILFFLIISLILFNWKYFSLVNKENLESLKYEKIIKKINKKKSKNLYEVENFIVQNTSIYGTLTALSLAKKYVECNNLDKALLQLNNSLKYTKEENLKNLLKINIAKIQIQKNENNKAMNILETIQNHNWKNIIEHMKGDIFININNKKEAIKSWKKSLFIEDSNASKEIINMKLNELKEQN.

Topologically, residues 1-8 are cytoplasmic; it reads MLNISKKN. The chain crosses the membrane as a helical span at residues 9 to 29; the sequence is IIFFILFFLIISLILFNWKYF. Over 30–193 the chain is Periplasmic; the sequence is SLVNKENLES…MKLNELKEQN (164 aa).

The protein belongs to the YfgM family. Interacts with the SecYEG translocon. Forms a complex with PpiD.

The protein localises to the cell inner membrane. In terms of biological role, may mediate protein transfer from the SecYEG translocon to the periplasmic chaperone network via its periplasmic C-terminal region. This Buchnera aphidicola subsp. Acyrthosiphon pisum (strain APS) (Acyrthosiphon pisum symbiotic bacterium) protein is Ancillary SecYEG translocon subunit.